Consider the following 484-residue polypeptide: tRNA sulfurtransferase (484 aa).

The THUMP domain occupies 63-167 (REMIERLTCT…DQRLYVIHNQ (105 aa)). Residues 185 to 186 (LM), Lys-267, Gly-289, and Gln-298 contribute to the ATP site. Cysteines 346 and 457 form a disulfide. One can recognise a Rhodanese domain in the interval 405–483 (ALPGQIVIDI…GHANVRVYRP (79 aa)). Catalysis depends on Cys-457, which acts as the Cysteine persulfide intermediate.

Belongs to the ThiI family.

It localises to the cytoplasm. The catalysed reaction is [ThiI sulfur-carrier protein]-S-sulfanyl-L-cysteine + a uridine in tRNA + 2 reduced [2Fe-2S]-[ferredoxin] + ATP + H(+) = [ThiI sulfur-carrier protein]-L-cysteine + a 4-thiouridine in tRNA + 2 oxidized [2Fe-2S]-[ferredoxin] + AMP + diphosphate. The enzyme catalyses [ThiS sulfur-carrier protein]-C-terminal Gly-Gly-AMP + S-sulfanyl-L-cysteinyl-[cysteine desulfurase] + AH2 = [ThiS sulfur-carrier protein]-C-terminal-Gly-aminoethanethioate + L-cysteinyl-[cysteine desulfurase] + A + AMP + 2 H(+). It participates in cofactor biosynthesis; thiamine diphosphate biosynthesis. Catalyzes the ATP-dependent transfer of a sulfur to tRNA to produce 4-thiouridine in position 8 of tRNAs, which functions as a near-UV photosensor. Also catalyzes the transfer of sulfur to the sulfur carrier protein ThiS, forming ThiS-thiocarboxylate. This is a step in the synthesis of thiazole, in the thiamine biosynthesis pathway. The sulfur is donated as persulfide by IscS. The sequence is that of tRNA sulfurtransferase from Pseudomonas putida (strain ATCC 47054 / DSM 6125 / CFBP 8728 / NCIMB 11950 / KT2440).